A 217-amino-acid chain; its full sequence is MKSAVMAVACAAAPGLRRPSAFNGAALTTSAKSSSAMKMSFESEIGAQAPLGFWDPLGLLADADQDGFERLRYVEVKHGRIAMLAIAGHLTQQNARLPGMLSNSANLSFADMPNGVAALSKIPPAGLAQIFAFIGFLELAVMKNVEGSFPGDFTLGGNPFGASWDAMSEETQASKRAIELNNGRAAQMGILALMVHEELNNKPYVINDLVGASYTFN.

The N-terminal 39 residues, 1–39 (MKSAVMAVACAAAPGLRRPSAFNGAALTTSAKSSSAMKM), are a transit peptide targeting the chloroplast. 3 helical membrane passes run 81-101 (IAML…PGML), 122-142 (IPPA…LAVM), and 183-203 (GRAA…NNKP).

This sequence belongs to the fucoxanthin chlorophyll protein family. In terms of assembly, the LHC complex of chromophytic algae is composed of fucoxanthin, chlorophyll A and C bound non-covalently by fucoxanthin chlorophyll proteins (FCPs). The ratio of pigments in this LHC is; fucoxanthin: chlorophyll C: chlorophyll A; (0.6-1): (0.1-0.3): (1).

The protein resides in the plastid. Its subcellular location is the chloroplast thylakoid membrane. Its function is as follows. The light-harvesting complex (LHC) functions as a light receptor, it captures and delivers excitation energy to photosystems with which it is closely associated. Energy is transferred from the carotenoid and chlorophyll C (or B) to chlorophyll A and the photosynthetic reaction centers where it is used to synthesize ATP and reducing power. The polypeptide is Fucoxanthin-chlorophyll a-c binding protein A, chloroplastic (FCPA) (Macrocystis pyrifera (Giant kelp)).